The sequence spans 191 residues: Ribosome maturation factor RimM (191 aa).

Positions 114-191 (EDEYYWVDLI…RIVVDWQPDY (78 aa)) constitute a PRC barrel domain.

Belongs to the RimM family. In terms of assembly, binds ribosomal protein uS19.

The protein localises to the cytoplasm. An accessory protein needed during the final step in the assembly of 30S ribosomal subunit, possibly for assembly of the head region. Essential for efficient processing of 16S rRNA. May be needed both before and after RbfA during the maturation of 16S rRNA. It has affinity for free ribosomal 30S subunits but not for 70S ribosomes. In Paracidovorax citrulli (strain AAC00-1) (Acidovorax citrulli), this protein is Ribosome maturation factor RimM.